A 1068-amino-acid polypeptide reads, in one-letter code: MPLNKDIKKVLVIGSGPIVIGQAAEFDYSGTQACEGLKEEGVEVVLINSNPATIMTDKKVADKVYLEPLTVEFVEKVIAKERPDSLLAGMGGQTGLNLAVELYDKGILKKYGVNVIGTSIESIKEGEDRELFRNVMSRINEPVIQSEIVTDMEDGKDFANKIGYPIIVRPAYTLGGTGGGIAESEEELDEILALGLQLSSIGQVLLEKSVKGWKEIEYEVMRDSRGNCITVCNMENIDPVGIHTGDSIVVAPSQTLSDKEYQMLRSASINILNSIGIKGGCNVQFALNPNSFEYAVIEINPRVSRSSALASKATGYPIAKVASKIALGYTLDEIKNAVTEKTYACFEPSLDYVVVKIPKWPFDKFQGADRVLGTKMMATGEIMAIGSNFEAAFLKGTRSLEIGKYSLEHKKFRELSIEELKTRVISPDDERIFALAEMLRRDYRMDKVAEITGIDKFFIKKFRWIVEEEQRLRLSKIDDLDKEWLYKLKKKGFSDKGIADMLKVSPEDIYRLRNIWRINPIYKMVDTCGGEFEALSPYYYSTYDVYDEVEVSKNKKVIVIGSGPIRIGQGIEFDYASVHCVKALKKLGIETIIVNNNPETVSTDFDVSDKLYFEPLTEEDVLNIVEKEKPDGVILQFGGQTAIKLANFLKEKNIPTLGTTADQIDMAEDREKFDELLEKLKIARPKGKGIWSVEDGLEEAKKLGFPVLVRPSYVLGGQGMEITHDEKELVYYLSNAFQKDKKNPILIDKYLMGREIEVDAISDGEDVLIPGIMEHLERAGVHSGDSITMYPTQNVSKDIKEKILEYTKKLALGIGIKGMINIQFIEFQGNLYVIEVNPRASRTVPYISKVSKVPIVDIATRVMLGEKLNDLGYGVGVYKEPELISVKVPVFSTQKLPRVEVCLGPEMKSTGEVLGVGKTLDEALYKGFIGANISIKKEKGTVLATINDHDKEEFLPIAKKLHSLGYKFIATSKTAELLKEEGIEVKQVRKLKEESPNIIDTIKNDEVDLVVNTPTKGNDSKRDGFHIRRAAIERNLGVITSLDTLKAIVDIKFKEIKDETLYIFDLSN.

The interval Met-1–Glu-401 is carboxyphosphate synthetic domain. Residues Arg-129, Arg-169, Gly-175, Gly-176, Lys-208, Val-210, Glu-215, Gly-241, Ile-242, His-243, Gln-284, and Glu-298 each contribute to the ATP site. Residues Arg-133 to Leu-327 enclose the ATP-grasp 1 domain. Residues Gln-284, Glu-298, and Asn-300 each contribute to the Mg(2+) site. Residues Gln-284, Glu-298, and Asn-300 each coordinate Mn(2+). Positions Ile-402–Val-549 are oligomerization domain. The tract at residues Glu-550 to Asn-932 is carbamoyl phosphate synthetic domain. Residues Asp-674–Leu-864 form the ATP-grasp 2 domain. ATP is bound by residues Arg-710, Lys-749, Leu-751, Glu-755, Gly-780, Val-781, His-782, Ser-783, Gln-823, and Glu-835. Mg(2+)-binding residues include Gln-823, Glu-835, and Asn-837. Gln-823, Glu-835, and Asn-837 together coordinate Mn(2+). The 136-residue stretch at Ile-933–Asn-1068 folds into the MGS-like domain. The allosteric domain stretch occupies residues Ile-933–Asn-1068.

It belongs to the CarB family. In terms of assembly, composed of two chains; the small (or glutamine) chain promotes the hydrolysis of glutamine to ammonia, which is used by the large (or ammonia) chain to synthesize carbamoyl phosphate. Tetramer of heterodimers (alpha,beta)4. Requires Mg(2+) as cofactor. It depends on Mn(2+) as a cofactor.

It carries out the reaction hydrogencarbonate + L-glutamine + 2 ATP + H2O = carbamoyl phosphate + L-glutamate + 2 ADP + phosphate + 2 H(+). It catalyses the reaction hydrogencarbonate + NH4(+) + 2 ATP = carbamoyl phosphate + 2 ADP + phosphate + 2 H(+). It participates in amino-acid biosynthesis; L-arginine biosynthesis; carbamoyl phosphate from bicarbonate: step 1/1. Its pathway is pyrimidine metabolism; UMP biosynthesis via de novo pathway; (S)-dihydroorotate from bicarbonate: step 1/3. Functionally, large subunit of the glutamine-dependent carbamoyl phosphate synthetase (CPSase). CPSase catalyzes the formation of carbamoyl phosphate from the ammonia moiety of glutamine, carbonate, and phosphate donated by ATP, constituting the first step of 2 biosynthetic pathways, one leading to arginine and/or urea and the other to pyrimidine nucleotides. The large subunit (synthetase) binds the substrates ammonia (free or transferred from glutamine from the small subunit), hydrogencarbonate and ATP and carries out an ATP-coupled ligase reaction, activating hydrogencarbonate by forming carboxy phosphate which reacts with ammonia to form carbamoyl phosphate. The protein is Carbamoyl phosphate synthase large chain of Clostridium botulinum (strain Langeland / NCTC 10281 / Type F).